The following is a 434-amino-acid chain: Nicotinate phosphoribosyltransferase (434 aa).

Phosphohistidine; by autocatalysis is present on His242.

It belongs to the NAPRTase family. In terms of processing, transiently phosphorylated on a His residue during the reaction cycle. Phosphorylation strongly increases the affinity for substrates and increases the rate of nicotinate D-ribonucleotide production. Dephosphorylation regenerates the low-affinity form of the enzyme, leading to product release.

It carries out the reaction nicotinate + 5-phospho-alpha-D-ribose 1-diphosphate + ATP + H2O = nicotinate beta-D-ribonucleotide + ADP + phosphate + diphosphate. Its pathway is cofactor biosynthesis; NAD(+) biosynthesis; nicotinate D-ribonucleotide from nicotinate: step 1/1. Its function is as follows. Catalyzes the synthesis of beta-nicotinate D-ribonucleotide from nicotinate and 5-phospho-D-ribose 1-phosphate at the expense of ATP. The protein is Nicotinate phosphoribosyltransferase of Brucella abortus (strain S19).